Reading from the N-terminus, the 335-residue chain is Probable G-protein coupled receptor 174 (335 aa).

Topologically, residues 1-27 are extracellular; that stretch reads MTDNFTCNKTDGDNTDFRYFIYAVTYT. 2 N-linked (GlcNAc...) asparagine glycosylation sites follow: N4 and N8. Residues 28-48 traverse the membrane as a helical segment; sequence VILVPGLIGNILALWVFYGYM. Residues 49–53 lie on the Cytoplasmic side of the membrane; sequence KETKR. Residues 54-74 form a helical membrane-spanning segment; the sequence is AVVFMINLAIADLLQILSLPL. Residues 75-91 are Extracellular-facing; that stretch reads RIFYYLNHDWPFGPGLC. Residues C91 and C168 are joined by a disulfide bond. The helical transmembrane segment at 92-112 threads the bilayer; the sequence is MFCFYLKYVNMYASIYFLVCI. Residues 113–134 lie on the Cytoplasmic side of the membrane; sequence SVRRFWFLMYPFRFNDCKQKYD. The chain crosses the membrane as a helical span at residues 135–155; sequence LYISIIGWLIICLACLLFPLL. The Extracellular segment spans residues 156–182; sequence RTNDDTPGNRTKCFVDLPIRNVNLAQS. The N-linked (GlcNAc...) asparagine glycan is linked to N164. A helical transmembrane segment spans residues 183–203; that stretch reads VAMITIGEVVGFVTPLMIVLY. Residues 204–231 lie on the Cytoplasmic side of the membrane; the sequence is CTWKTALSLQNKYPISQHLGEKKKALKM. Residues 232-252 form a helical membrane-spanning segment; sequence ILTCAGVFLVCFVPYHFSFPL. Over 253-268 the chain is Extracellular; that stretch reads DFLVKSNEIKSCFARR. The chain crosses the membrane as a helical span at residues 269-289; it reads VILIFHSVALCLASLNSCLDP. Residues 290-335 lie on the Cytoplasmic side of the membrane; the sequence is VIYYFTTNEFRRRLSRQDLPDNIQLHTKSYKIASNHATSTVAAELC.

It belongs to the G-protein coupled receptor 1 family. As to quaternary structure, interacts with GNA13. Interacts with CCL21. Expressed in spleen and, at low levels, in brain. Highly expressed in developing and mature regulatory T-cells.

The protein resides in the cell membrane. Its function is as follows. G-protein-coupled receptor of lysophosphatidylserine (LysoPS) that plays different roles in immune response. Plays a negative role in regulatory T-cell accumulation and homeostasis. Under inflammatory conditions where LysoPS production increases, contributes to the down-regulation of regulatory T-cell activity to favor effector response. Mediates the suppression of IL-2 production in activated T-lymphocytes leading to inhibition of growth, proliferation and differentiation of T-cells. Mechanistically, acts via G(s)-containing heterotrimeric G proteins to trigger elevated cyclic AMP levels and protein kinase A/PKA activity, which may in turn act to antagonize proximal TCR signaling. Plays an important role in the initial period of sepsis through the regulation of macrophage polarization and pro- and anti-inflammatory cytokine secretions. Upon testosterone treatment, acts as a receptor for CCL21 and subsequently triggers through G(q)-alpha and G(12)/G(13) proteins a calcium flux leading to chemotactic effects on activated B-cells. Signals via GNA13 and PKA to promote CD86 up-regulation by follicular B-cells. The protein is Probable G-protein coupled receptor 174 (Gpr174) of Mus musculus (Mouse).